The primary structure comprises 243 residues: Probable 2-phosphosulfolactate phosphatase (243 aa).

This sequence belongs to the ComB family. It depends on Mg(2+) as a cofactor.

The enzyme catalyses (2R)-O-phospho-3-sulfolactate + H2O = (2R)-3-sulfolactate + phosphate. This Prochlorococcus marinus (strain SARG / CCMP1375 / SS120) protein is Probable 2-phosphosulfolactate phosphatase.